Reading from the N-terminus, the 365-residue chain is Class I histocompatibility antigen, Gogo-A*0501 alpha chain (365 aa).

Residues 1–24 (MAVVAPRTLLLLLSGALALTQTWA) form the signal peptide. An alpha-1 region spans residues 25-114 (GSHSMRYFST…ALRYYNQSED (90 aa)). Over 25–308 (GSHSMRYFST…EPSSQPTIPI (284 aa)) the chain is Extracellular. Asparagine 110 carries an N-linked (GlcNAc...) asparagine glycan. The segment at 115-206 (GSHTIQRMYG…ENGKETLQRT (92 aa)) is alpha-2. Disulfide bonds link cysteine 125-cysteine 188 and cysteine 227-cysteine 283. Residues 207 to 298 (DAPKTHTTHQ…GLPKPLTLRW (92 aa)) form an alpha-3 region. The Ig-like C1-type domain maps to 209–295 (PKTHTTHQAV…QHEGLPKPLT (87 aa)). The connecting peptide stretch occupies residues 299–308 (EPSSQPTIPI). A helical transmembrane segment spans residues 309 to 332 (VGIIAGLVLFGAVIAGAVVAAVRW). Over 333–365 (RRKSSDRKGGSYSQAASSDSAQGSDVSLTACKV) the chain is Cytoplasmic. The segment at 338–365 (DRKGGSYSQAASSDSAQGSDVSLTACKV) is disordered. The segment covering 342–359 (GSYSQAASSDSAQGSDVS) has biased composition (low complexity). The residue at position 343 (serine 343) is a Phosphoserine. Residue tyrosine 344 is modified to Phosphotyrosine. Residues serine 345, serine 349, serine 352, serine 356, and serine 359 each carry the phosphoserine modification.

This sequence belongs to the MHC class I family. Heterodimer of an alpha chain and a beta chain (beta-2-microglobulin).

It is found in the membrane. Its function is as follows. Involved in the presentation of foreign antigens to the immune system. The polypeptide is Class I histocompatibility antigen, Gogo-A*0501 alpha chain (Gorilla gorilla gorilla (Western lowland gorilla)).